Here is a 188-residue protein sequence, read N- to C-terminus: MDVNIAPLRAWDDFFPGSDRFAQPDFRDISKWNNRVVSNLLYYQTNYLVVAAMMISVVGFLSPFNMILGGIVVVLVFTGFVWAAHNKDALRRLKKRYPTTFVMVVMLASYFLISMFGGVMVFVFGITFPLLLMFIHASLRLRNLKNKLENKMEGIGLKRTPMGIVLDALEQQEEGINRLTDYISKVKE.

Methionine 1 carries the post-translational modification N-acetylmethionine. Residues 1–35 (MDVNIAPLRAWDDFFPGSDRFAQPDFRDISKWNNR) lie on the Cytoplasmic side of the membrane. Transmembrane regions (helical) follow at residues 36 to 56 (VVSN…MMIS) and 57 to 77 (VVGF…VLVF). Residues 78–93 (TGFVWAAHNKDALRRL) lie on the Cytoplasmic side of the membrane. Helical transmembrane passes span 94–114 (KKRY…FLIS) and 115–135 (MFGG…LMFI). The interval 103–117 (MVVMLASYFLISMFG) is required for homodimer formation and heterodimer formation with ARL6IP1. At 136 to 188 (HASLRLRNLKNKLENKMEGIGLKRTPMGIVLDALEQQEEGINRLTDYISKVKE) the chain is on the cytoplasmic side. The targeting to endoplasmic reticulum membrane stretch occupies residues 136 to 188 (HASLRLRNLKNKLENKMEGIGLKRTPMGIVLDALEQQEEGINRLTDYISKVKE).

It belongs to the PRA1 family. As to quaternary structure, homodimer. Heterodimer with ARL6IP1. Forms multimers. Interacts with ARL6. Interacts with prenylated RAB1A and RAB3A. Interacts with SLC1A1/EAAC1. Interacts with RTN2 (via first transmembrane domain). Does not interact with VAMP1, VAMP2 or VAMP3.

It is found in the endoplasmic reticulum membrane. It localises to the cell membrane. The protein localises to the cytoplasm. Its subcellular location is the cytoskeleton. Regulates intracellular concentrations of taurine and glutamate. Negatively modulates SLC1A1/EAAC1 glutamate transport activity by decreasing its affinity for glutamate in a PKC activity-dependent manner. Plays a role in the retention of SLC1A1/EAAC1 in the endoplasmic reticulum. This chain is PRA1 family protein 3 (ARL6IP5), found in Macaca fascicularis (Crab-eating macaque).